We begin with the raw amino-acid sequence, 122 residues long: Large ribosomal subunit protein uL14 (122 aa).

This sequence belongs to the universal ribosomal protein uL14 family. In terms of assembly, part of the 50S ribosomal subunit. Forms a cluster with proteins L3 and L19. In the 70S ribosome, L14 and L19 interact and together make contacts with the 16S rRNA in bridges B5 and B8.

Binds to 23S rRNA. Forms part of two intersubunit bridges in the 70S ribosome. This Salinibacter ruber (strain DSM 13855 / M31) protein is Large ribosomal subunit protein uL14.